The sequence spans 376 residues: Actin-related protein T1 (376 aa).

This sequence belongs to the actin family. As to expression, in skin, expressed in the basal, spinous and granular layers of the epidermis. Also expressed in hair follicles, sebaceaous glands, eccrine sweat glands and semen.

It is found in the cytoplasm. It localises to the cytoskeleton. The protein resides in the nucleus. Its subcellular location is the cytoplasmic vesicle. The protein localises to the secretory vesicle. It is found in the acrosome. Negatively regulates the Hedgehog (SHH) signaling. Binds to the promoter of the SHH signaling mediator, GLI1, and inhibits its expression. This Homo sapiens (Human) protein is Actin-related protein T1.